Consider the following 171-residue polypeptide: Peptidyl-prolyl cis-trans isomerase 7 (171 aa).

In terms of domain architecture, PPIase cyclophilin-type spans 7–170 (FFDITIAGKP…SECLIADCGQ (164 aa)).

This sequence belongs to the cyclophilin-type PPIase family.

The catalysed reaction is [protein]-peptidylproline (omega=180) = [protein]-peptidylproline (omega=0). Its function is as follows. PPIases accelerate the folding of proteins. It catalyzes the cis-trans isomerization of proline imidic peptide bonds in oligopeptides. In Caenorhabditis elegans, this protein is Peptidyl-prolyl cis-trans isomerase 7 (cyn-7).